Here is a 493-residue protein sequence, read N- to C-terminus: Zinc finger CCCH domain-containing protein 34 (493 aa).

3 C3H1-type zinc fingers span residues 14–43 (RRCNTDCVYFLASPFTCTKGSKCEYRHADG), 45–71 (RFNRRNCWYWFKGNCVNPSCTFRHPPL), and 91–118 (VKAANPCYFYYNSHCSKGDNCPYLHEPL). The disordered stretch occupies residues 397–477 (MGECPQPANH…SFSDDFEGPK (81 aa)). Over residues 409-420 (FRGRRKKNRGKQ) the composition is skewed to basic residues. Residues 452-468 (SNSSFSHSTACTPNVRS) are compositionally biased toward polar residues.

This Oryza sativa subsp. japonica (Rice) protein is Zinc finger CCCH domain-containing protein 34.